A 426-amino-acid chain; its full sequence is DUF724 domain-containing protein 9 (426 aa).

2 stretches are compositionally biased toward polar residues: residues 164-184 (ESSLTQGSGDETSDSVRNANE) and 213-222 (PRNQNASVND). The disordered stretch occupies residues 164–248 (ESSLTQGSGD…REESLCSDAS (85 aa)). Basic and acidic residues predominate over residues 223-242 (STRENENSEDINRKRKREES). The DUF724 domain occupies 256–425 (LPFEKKLSIW…LQFQTTASAP (170 aa)). Positions 370–402 (AEKESIKIENERKILELQRLNEEVDKEIAQSKS) form a coiled coil.

As to expression, expressed in flowers.

It is found in the nucleus. May be involved in the polar growth of plant cells via transportation of RNAs. This chain is DUF724 domain-containing protein 9, found in Arabidopsis thaliana (Mouse-ear cress).